A 701-amino-acid chain; its full sequence is MARTTPISLYRNIGISAHIDAGKTTTTERILFYTGVSHKIGEVHDGAATMDWMEQEQERGITITSAATTAFWSGMSQQYQQHRINVIDTPGHVDFTIEVERSMRVLDGAVMVYCAVGGVQPQSETVWRQANKYGVPRIAFVNKMDRTGANFLRVVEQIKTRLGGNVVALQLPIGAEDNFTGIVDLVKMKAINWNEADQGMTFTYEDIPAEMLSECEERRAMLVEAAAEASEELMEKFFEAGDLSEEEIKTALRQRVLAGEIIPVCCGSAFKNKGVQAMLDAVIDYLPAPTDIPAIKGINEDESEGERHASDEEPFAALAFKIATDPFVGNLTFFRVYSGVINSGDTVYNSVKQKRERFGRIVQMHANKREEIKEVRAGDIAAAIGLKEVGTGDTLCAQNAPIILERMEFPEPVISVAVEPKTKADQEKMGLALGRLAQEDPSFRVHTDEESGETIISGMGELHLDIIVDRMRREFKVEANIGKPQVSYRETIRTRVNDVEGKHAKQSGGRGQYGHVVIDLYPLDAEGPGYEFVNEIKGGVIPGEFIPAVDKGIQEQLKSGPLAGYPVEDIGVRLHFGSYHDVDSSELAFKLAASLAFKAAFAKANPVLLEPIMKVEVETPPDYVGDVIGDLSRRRAMVNGQEATEFVVKINAEVPLSEMFGYATDLRSQTQGRASYSMEPLKYSEAPTSVAAAIIEARKAK.

The 283-residue stretch at 8–290 folds into the tr-type G domain; sequence SLYRNIGISA…AVIDYLPAPT (283 aa). Residues 17–24, 88–92, and 142–145 each bind GTP; these read AHIDAGKT, DTPGH, and NKMD.

The protein belongs to the TRAFAC class translation factor GTPase superfamily. Classic translation factor GTPase family. EF-G/EF-2 subfamily.

It is found in the cytoplasm. Functionally, catalyzes the GTP-dependent ribosomal translocation step during translation elongation. During this step, the ribosome changes from the pre-translocational (PRE) to the post-translocational (POST) state as the newly formed A-site-bound peptidyl-tRNA and P-site-bound deacylated tRNA move to the P and E sites, respectively. Catalyzes the coordinated movement of the two tRNA molecules, the mRNA and conformational changes in the ribosome. The chain is Elongation factor G from Haemophilus ducreyi (strain 35000HP / ATCC 700724).